A 591-amino-acid polypeptide reads, in one-letter code: uncharacterized protein (591 aa).

The first 30 residues, 1–30 (MGKLLFGKLVFKKSLFLLSGMSSLAVFLTA), serve as a signal peptide directing secretion. Cysteine 31 carries the N-palmitoyl cysteine lipid modification. The S-diacylglycerol cysteine moiety is linked to residue cysteine 31. Residues 476–488 (KKKLSEVATKKNE) show a composition bias toward basic and acidic residues. Disordered stretches follow at residues 476 to 497 (KKKLSEVATKKNENGSTKNGSN) and 510 to 535 (SSSSTSMRNGSSDSNQQNFKTTDNDG). A compositionally biased stretch (low complexity) spans 510-523 (SSSSTSMRNGSSDS).

The protein to T.pallidum TmpC.

The protein localises to the cell membrane. This is an uncharacterized protein from Mycoplasma genitalium (strain ATCC 33530 / DSM 19775 / NCTC 10195 / G37) (Mycoplasmoides genitalium).